A 149-amino-acid polypeptide reads, in one-letter code: D-aminoacyl-tRNA deacylase (149 aa).

The short motif at 137–138 is the Gly-cisPro motif, important for rejection of L-amino acids element; sequence GP.

Belongs to the DTD family. As to quaternary structure, homodimer.

It localises to the cytoplasm. The catalysed reaction is glycyl-tRNA(Ala) + H2O = tRNA(Ala) + glycine + H(+). It carries out the reaction a D-aminoacyl-tRNA + H2O = a tRNA + a D-alpha-amino acid + H(+). In terms of biological role, an aminoacyl-tRNA editing enzyme that deacylates mischarged D-aminoacyl-tRNAs. Also deacylates mischarged glycyl-tRNA(Ala), protecting cells against glycine mischarging by AlaRS. Acts via tRNA-based rather than protein-based catalysis; rejects L-amino acids rather than detecting D-amino acids in the active site. By recycling D-aminoacyl-tRNA to D-amino acids and free tRNA molecules, this enzyme counteracts the toxicity associated with the formation of D-aminoacyl-tRNA entities in vivo and helps enforce protein L-homochirality. In Caldicellulosiruptor saccharolyticus (strain ATCC 43494 / DSM 8903 / Tp8T 6331), this protein is D-aminoacyl-tRNA deacylase.